Here is a 317-residue protein sequence, read N- to C-terminus: uncharacterized protein (317 aa).

This sequence to M.avium MAV169.

This is an uncharacterized protein from Mycobacterium tuberculosis (strain CDC 1551 / Oshkosh).